Consider the following 210-residue polypeptide: CLAVATA3/ESR (CLE)-related protein 4A-3 (210 aa).

Positions 1–21 are cleaved as a signal peptide; sequence MAKNAMLCLLILRVVLALAFA. The tract at residues 21 to 83 is required for secretion from the host cytoplasm to the host apoplasm; that stretch reads ATNKKGDEEP…SNQLPNNNWM (63 aa). Asn-32 is a glycosylation site (N-linked (GlcNAc...) asparagine). Residues 116–210 are disordered; it reads RKTGMHSQRH…APAGPDPIHH (95 aa). Composition is skewed to basic and acidic residues over residues 125–137 and 144–200; these read HHEE…EKRV and PIHH…EKRG. The stretch at 127-135 is one A-1 repeat; the sequence is EETTLEQEK. The tract at residues 127–198 is 4 X approximate repeat A; sequence EETTLEQEKR…HEDTTLEQEK (72 aa). The stretch at 136–147 is one CLE-1 repeat; sequence RVAGAGPDPIHH. Residues 136–210 are 4 X approximate repeat CLE; the sequence is RVAGAGPDPI…APAGPDPIHH (75 aa). The A-2 repeat unit spans residues 148 to 156; that stretch reads QDTTLEQEK. The CLE-2 repeat unit spans residues 157 to 168; the sequence is RAVPAGPDPKHH. The A-3 repeat unit spans residues 169–177; it reads EETTLEQEK. The CLE-3 repeat unit spans residues 178 to 189; it reads RAVPAGPDPKHH. An A-4 repeat occupies 190 to 198; sequence EDTTLEQEK. One copy of the CLE-4 repeat lies at 199–210; that stretch reads RGAPAGPDPIHH.

This sequence belongs to the CLV3/ESR signal peptide family. As to expression, highly expressed exclusively within the dorsal esophageal gland cell during syncytium formation in host plants.

The protein localises to the secreted. It is found in the host cytoplasm. Its subcellular location is the host extracellular space. It localises to the extracellular space. The protein resides in the apoplast. Functionally, mimics host plant CLE extracellular signal peptides that regulate cell fate. May play a role in the differentiation or division of feeding cells (syncytia) induced in plant roots during infection. The protein is CLAVATA3/ESR (CLE)-related protein 4A-3 (CLE-4A-3) of Globodera rostochiensis (Golden nematode worm).